A 192-amino-acid chain; its full sequence is Aminodeoxychorismate synthase component 2 (192 aa).

The Glutamine amidotransferase type-1 domain maps to 3–192 (SVLMIDNCDS…LANLIHRPCH (190 aa)). Catalysis depends on residues Cys-83, His-170, and Glu-172.

As to quaternary structure, monomer. Heterodimer consisting of two non-identical subunits: a glutamine amidotransferase subunit (PabA) and a aminodeoxychorismate synthase subunit (PabB).

It carries out the reaction chorismate + L-glutamine = 4-amino-4-deoxychorismate + L-glutamate. It participates in cofactor biosynthesis; tetrahydrofolate biosynthesis; 4-aminobenzoate from chorismate: step 1/2. In terms of biological role, part of a heterodimeric complex that catalyzes the two-step biosynthesis of 4-amino-4-deoxychorismate (ADC), a precursor of p-aminobenzoate (PABA) and tetrahydrofolate. In the first step, a glutamine amidotransferase (PabA) generates ammonia as a substrate that, along with chorismate, is used in the second step, catalyzed by aminodeoxychorismate synthase (PabB) to produce ADC. PabA converts glutamine into glutamate only in the presence of stoichiometric amounts of PabB. The chain is Aminodeoxychorismate synthase component 2 from Streptomyces lividans.